The following is a 161-amino-acid chain: Allophycocyanin alpha subunit (161 aa).

Residue Cys81 participates in (2R,3E)-phycocyanobilin binding.

Belongs to the phycobiliprotein family. In terms of assembly, heterodimer of an alpha and a beta chain. Contains one covalently linked phycocyanobilin chromophore. The chromophore on position 81 is added by the phycocyanobilin lyase CpcUS.

The protein localises to the cellular thylakoid membrane. Its function is as follows. Light-harvesting photosynthetic bile pigment-protein from the phycobiliprotein complex. Allophycocyanin has a maximum absorption at approximately 650 nanometers. The sequence is that of Allophycocyanin alpha subunit (apcA) from Picosynechococcus sp. (strain ATCC 27264 / PCC 7002 / PR-6) (Agmenellum quadruplicatum).